We begin with the raw amino-acid sequence, 226 residues long: 2-C-methyl-D-erythritol 4-phosphate cytidylyltransferase (226 aa).

The protein belongs to the IspD/TarI cytidylyltransferase family. IspD subfamily.

It carries out the reaction 2-C-methyl-D-erythritol 4-phosphate + CTP + H(+) = 4-CDP-2-C-methyl-D-erythritol + diphosphate. It functions in the pathway isoprenoid biosynthesis; isopentenyl diphosphate biosynthesis via DXP pathway; isopentenyl diphosphate from 1-deoxy-D-xylulose 5-phosphate: step 2/6. Its function is as follows. Catalyzes the formation of 4-diphosphocytidyl-2-C-methyl-D-erythritol from CTP and 2-C-methyl-D-erythritol 4-phosphate (MEP). In Haemophilus ducreyi (strain 35000HP / ATCC 700724), this protein is 2-C-methyl-D-erythritol 4-phosphate cytidylyltransferase.